Reading from the N-terminus, the 444-residue chain is Methylenetetrahydrofolate--tRNA-(uracil-5-)-methyltransferase TrmFO (444 aa).

10–15 (GAGLAG) contacts FAD.

This sequence belongs to the MnmG family. TrmFO subfamily. The cofactor is FAD.

The protein resides in the cytoplasm. The enzyme catalyses uridine(54) in tRNA + (6R)-5,10-methylene-5,6,7,8-tetrahydrofolate + NADH + H(+) = 5-methyluridine(54) in tRNA + (6S)-5,6,7,8-tetrahydrofolate + NAD(+). The catalysed reaction is uridine(54) in tRNA + (6R)-5,10-methylene-5,6,7,8-tetrahydrofolate + NADPH + H(+) = 5-methyluridine(54) in tRNA + (6S)-5,6,7,8-tetrahydrofolate + NADP(+). Functionally, catalyzes the folate-dependent formation of 5-methyl-uridine at position 54 (M-5-U54) in all tRNAs. The protein is Methylenetetrahydrofolate--tRNA-(uracil-5-)-methyltransferase TrmFO of Streptococcus pneumoniae serotype 2 (strain D39 / NCTC 7466).